A 611-amino-acid chain; its full sequence is uncharacterized protein (611 aa).

Belongs to the metallo-dependent hydrolases superfamily. N-acyl-D-amino-acid deacylase family.

This is an uncharacterized protein from Mycobacterium bovis (strain ATCC BAA-935 / AF2122/97).